Reading from the N-terminus, the 105-residue chain is Flagellar transcriptional regulator FlhD (105 aa).

Belongs to the FlhD family. Homodimer; disulfide-linked. Forms a heterohexamer composed of two FlhC and four FlhD subunits. Each FlhC binds a FlhD dimer, forming a heterotrimer, and a hexamer assembles by dimerization of two heterotrimers.

The protein resides in the cytoplasm. In terms of biological role, functions in complex with FlhC as a master transcriptional regulator that regulates transcription of several flagellar and non-flagellar operons by binding to their promoter region. Activates expression of class 2 flagellar genes, including fliA, which is a flagellum-specific sigma factor that turns on the class 3 genes. Also regulates genes whose products function in a variety of physiological pathways. This Ralstonia nicotianae (strain ATCC BAA-1114 / GMI1000) (Ralstonia solanacearum) protein is Flagellar transcriptional regulator FlhD.